The primary structure comprises 84 residues: uncharacterized protein (84 aa).

Belongs to the csb family.

This is an uncharacterized protein from Dictyostelium discoideum (Social amoeba).